We begin with the raw amino-acid sequence, 510 residues long: NAD(P)H-quinone oxidoreductase subunit 2, chloroplastic (510 aa).

12 helical membrane passes run 24–44, 59–79, 99–119, 124–144, 149–169, 183–203, 229–249, 295–315, 323–343, 347–367, 395–415, and 418–438; these read LLLF…GLIL, WFYF…LFRW, IFQF…VEYI, MAIT…MFLC, LITI…LSGY, YLLM…WLYG, ISIA…PAPF, WHLL…LIAI, MLAY…IVGD, GYAS…GTFA, ALSS…AGFF, and LHLF…IGLL.

The protein belongs to the complex I subunit 2 family. In terms of assembly, NDH is composed of at least 16 different subunits, 5 of which are encoded in the nucleus.

The protein localises to the plastid. Its subcellular location is the chloroplast thylakoid membrane. The enzyme catalyses a plastoquinone + NADH + (n+1) H(+)(in) = a plastoquinol + NAD(+) + n H(+)(out). The catalysed reaction is a plastoquinone + NADPH + (n+1) H(+)(in) = a plastoquinol + NADP(+) + n H(+)(out). NDH shuttles electrons from NAD(P)H:plastoquinone, via FMN and iron-sulfur (Fe-S) centers, to quinones in the photosynthetic chain and possibly in a chloroplast respiratory chain. The immediate electron acceptor for the enzyme in this species is believed to be plastoquinone. Couples the redox reaction to proton translocation, and thus conserves the redox energy in a proton gradient. The polypeptide is NAD(P)H-quinone oxidoreductase subunit 2, chloroplastic (Yucca glauca (Soapweed yucca)).